A 236-amino-acid chain; its full sequence is Leucyl/phenylalanyl-tRNA--protein transferase (236 aa).

The protein belongs to the L/F-transferase family.

It localises to the cytoplasm. The catalysed reaction is N-terminal L-lysyl-[protein] + L-leucyl-tRNA(Leu) = N-terminal L-leucyl-L-lysyl-[protein] + tRNA(Leu) + H(+). The enzyme catalyses N-terminal L-arginyl-[protein] + L-leucyl-tRNA(Leu) = N-terminal L-leucyl-L-arginyl-[protein] + tRNA(Leu) + H(+). It carries out the reaction L-phenylalanyl-tRNA(Phe) + an N-terminal L-alpha-aminoacyl-[protein] = an N-terminal L-phenylalanyl-L-alpha-aminoacyl-[protein] + tRNA(Phe). Functions in the N-end rule pathway of protein degradation where it conjugates Leu, Phe and, less efficiently, Met from aminoacyl-tRNAs to the N-termini of proteins containing an N-terminal arginine or lysine. The sequence is that of Leucyl/phenylalanyl-tRNA--protein transferase from Yersinia enterocolitica serotype O:8 / biotype 1B (strain NCTC 13174 / 8081).